The chain runs to 782 residues: E3 ubiquitin-protein ligase SopA (782 aa).

The disordered stretch occupies residues 140 to 170 (SANNRPTVSEGRTPPVSPSLSLQATSSPSSP). Low complexity predominate over residues 157–170 (PSLSLQATSSPSSP). Catalysis depends on Cys-753, which acts as the Glycyl thioester intermediate.

Belongs to the SopA E3 ligase family. In terms of processing, ubiquitinated in the presence of host E1 ubiquitin-activating enzyme, E2 ubiquitin-conjugating enzyme and ubiquitin.

The protein resides in the secreted. The protein localises to the host cell. The catalysed reaction is S-ubiquitinyl-[E2 ubiquitin-conjugating enzyme]-L-cysteine + [acceptor protein]-L-lysine = [E2 ubiquitin-conjugating enzyme]-L-cysteine + N(6)-ubiquitinyl-[acceptor protein]-L-lysine.. In terms of biological role, effector proteins function to alter host cell physiology and promote bacterial survival in host tissues. This protein is an E3 ubiquitin ligase that interferes with host's ubiquitination pathway. The protein is E3 ubiquitin-protein ligase SopA (sopA) of Salmonella agona (strain SL483).